The chain runs to 282 residues: Acetyl-coenzyme A carboxylase carboxyl transferase subunit beta (282 aa).

Residues 29 to 282 (LMQRCPNCGL…LLKYGGMQDD (254 aa)) form the CoA carboxyltransferase N-terminal domain. Cysteine 33, cysteine 36, cysteine 51, and cysteine 54 together coordinate Zn(2+). Residues 33–54 (CPNCGLEFFARRLDKYKTCPDC) form a C4-type zinc finger.

Belongs to the AccD/PCCB family. In terms of assembly, acetyl-CoA carboxylase is a heterohexamer composed of biotin carboxyl carrier protein (AccB), biotin carboxylase (AccC) and two subunits each of ACCase subunit alpha (AccA) and ACCase subunit beta (AccD). Zn(2+) is required as a cofactor.

The protein resides in the cytoplasm. The catalysed reaction is N(6)-carboxybiotinyl-L-lysyl-[protein] + acetyl-CoA = N(6)-biotinyl-L-lysyl-[protein] + malonyl-CoA. It participates in lipid metabolism; malonyl-CoA biosynthesis; malonyl-CoA from acetyl-CoA: step 1/1. In terms of biological role, component of the acetyl coenzyme A carboxylase (ACC) complex. Biotin carboxylase (BC) catalyzes the carboxylation of biotin on its carrier protein (BCCP) and then the CO(2) group is transferred by the transcarboxylase to acetyl-CoA to form malonyl-CoA. In Lactobacillus delbrueckii subsp. bulgaricus (strain ATCC BAA-365 / Lb-18), this protein is Acetyl-coenzyme A carboxylase carboxyl transferase subunit beta.